Consider the following 214-residue polypeptide: Epoxide hydrolase EphH (214 aa).

The Nucleophile role is filled by serine 28. Active-site charge relay system residues include aspartate 156 and histidine 186.

Belongs to the AB hydrolase superfamily.

It catalyses the reaction an epoxide + H2O = an ethanediol. Inhibited by AUDA, a known epoxide hydrolase inhibitor. Its function is as follows. Catalyzes the hydrolysis of epoxide-containing substrates. In vitro, catalyzes the hydrolysis of the synthetic compounds PHOME and styrene oxide. Plays an essential role in subverting phagosomal acidification. Plays a major role in the survival of M.tuberculosis (Mtb) during in vitro acidic stress and protects Mtb in response to phagosomal acidification inside macrophages. Also supports Mtb growth under the nutrient-deprived condition at pH 7.0. This is Epoxide hydrolase EphH from Mycobacterium tuberculosis (strain ATCC 25618 / H37Rv).